Reading from the N-terminus, the 520-residue chain is Protein U4 (520 aa).

This sequence belongs to the herpesviridae U4 family.

The chain is Protein U4 from Elephantid herpesvirus 1 (isolate Asian elephant/Berlin/Kiba/1998) (EIHV-1).